Here is a 133-residue protein sequence, read N- to C-terminus: Small ribosomal subunit protein uS9 (133 aa).

Belongs to the universal ribosomal protein uS9 family.

This chain is Small ribosomal subunit protein uS9, found in Picrophilus torridus (strain ATCC 700027 / DSM 9790 / JCM 10055 / NBRC 100828 / KAW 2/3).